The following is a 274-amino-acid chain: Purine nucleoside phosphorylase 1 (274 aa).

Phosphate-binding positions include Ser29, His60, 80 to 82, and Ala112; that span reads RFH. Ser29 carries the phosphoserine modification. Residue Glu192 coordinates a purine D-ribonucleoside. Ser211 lines the phosphate pocket. Position 234 (Asn234) interacts with a purine D-ribonucleoside.

The protein belongs to the PNP/MTAP phosphorylase family. Homotrimer.

It carries out the reaction a purine D-ribonucleoside + phosphate = a purine nucleobase + alpha-D-ribose 1-phosphate. The catalysed reaction is a purine 2'-deoxy-D-ribonucleoside + phosphate = a purine nucleobase + 2-deoxy-alpha-D-ribose 1-phosphate. Its pathway is purine metabolism; purine nucleoside salvage. In terms of biological role, the purine nucleoside phosphorylases catalyze the phosphorolytic breakdown of the N-glycosidic bond in the beta-(deoxy)ribonucleoside molecules, with the formation of the corresponding free purine bases and pentose-1-phosphate. Cleaves guanosine, inosine, 2'-deoxyguanosine and 2'-deoxyinosine. In Geobacillus stearothermophilus (Bacillus stearothermophilus), this protein is Purine nucleoside phosphorylase 1 (punA).